Reading from the N-terminus, the 492-residue chain is Trypanothione reductase (492 aa).

An FAD-binding site is contributed by 35-52 (DVQTVHGPPFFAALGGTC). A disulfide bridge connects residues cysteine 52 and cysteine 57. Histidine 461 functions as the Proton acceptor in the catalytic mechanism.

It belongs to the class-I pyridine nucleotide-disulfide oxidoreductase family. Homodimer. FAD serves as cofactor.

Its subcellular location is the cytoplasm. It catalyses the reaction trypanothione + NADP(+) = trypanothione disulfide + NADPH + H(+). Functionally, trypanothione is the parasite analog of glutathione; this enzyme is the equivalent of glutathione reductase. The sequence is that of Trypanothione reductase (TPR) from Trypanosoma congolense.